Consider the following 701-residue polypeptide: DNA-directed RNA polymerase subunit beta' (701 aa).

Zn(2+)-binding residues include C76, C78, C94, and C97. Mg(2+)-binding residues include D511, D513, and D515.

The protein belongs to the RNA polymerase beta' chain family. RpoC1 subfamily. As to quaternary structure, in plastids the minimal PEP RNA polymerase catalytic core is composed of four subunits: alpha, beta, beta', and beta''. When a (nuclear-encoded) sigma factor is associated with the core the holoenzyme is formed, which can initiate transcription. Mg(2+) is required as a cofactor. It depends on Zn(2+) as a cofactor.

The protein resides in the plastid. Its subcellular location is the chloroplast. It carries out the reaction RNA(n) + a ribonucleoside 5'-triphosphate = RNA(n+1) + diphosphate. In terms of biological role, DNA-dependent RNA polymerase catalyzes the transcription of DNA into RNA using the four ribonucleoside triphosphates as substrates. The protein is DNA-directed RNA polymerase subunit beta' of Pelargonium hortorum (Common geranium).